The sequence spans 2157 residues: Mediator of RNA polymerase II transcription subunit 12-like protein (2157 aa).

Positions 1-31 (MAAFGLLSYEQRPLKRPRLGPPDVYPQDPKQ) are disordered. At Thr462 the chain carries Phosphothreonine. Residues 1437 to 1456 (ELEKGQHLGSSSKKERDRQK) show a composition bias toward basic and acidic residues. Disordered stretches follow at residues 1437–1461 (ELEK…KSMS), 1724–1807 (RSYY…SQMT), and 2040–2157 (IDAV…PSHF). The segment covering 1771-1780 (TKGRKRKTKS) has biased composition (basic residues). Low complexity-rich tracts occupy residues 2063–2076 (PRQQ…RLLQ), 2083–2101 (QQPQ…QSQA), and 2116–2136 (RQGL…RQLQ). Residues 2137–2148 (KQLSSNQPQQGV) are compositionally biased toward polar residues.

The protein belongs to the Mediator complex subunit 12 family. In terms of assembly, may be a component of the Mediator complex, which is known to be composed of MED1, MED4, MED6, MED7, MED8, MED9, MED10, MED11, MED12, MED13, MED13L, MED14, MED15, MED16, MED17, MED18, MED19, MED20, MED21, MED22, MED23, MED24, MED25, MED26, MED27, MED29, MED30, MED31, CCNC, CDK8 and CDC2L6/CDK11. The MED12, MED13, CCNC and CDK8 subunits form a distinct module termed the CDK8 module. Mediator containing the CDK8 module is less active than Mediator lacking this module in supporting transcriptional activation. Individual preparations of the Mediator complex lacking one or more distinct subunits have been variously termed ARC, CRSP, DRIP, PC2, SMCC and TRAP.

The protein resides in the nucleus. May be a component of the Mediator complex, a coactivator involved in the regulated transcription of nearly all RNA polymerase II-dependent genes. Mediator functions as a bridge to convey information from gene-specific regulatory proteins to the basal RNA polymerase II transcription machinery. Mediator is recruited to promoters by direct interactions with regulatory proteins and serves as a scaffold for the assembly of a functional preinitiation complex with RNA polymerase II and the general transcription factors. The polypeptide is Mediator of RNA polymerase II transcription subunit 12-like protein (Med12l) (Mus musculus (Mouse)).